A 417-amino-acid polypeptide reads, in one-letter code: Actin-related protein 10 (417 aa).

It belongs to the actin family. In terms of assembly, subunit of dynactin, a multiprotein complex part of a tripartite complex with dynein and a adapter, such as BICDL1, BICD2 or HOOK3. The dynactin complex is built around ACTR1A/ACTB filament and consists of an actin-related filament composed of a shoulder domain, a pointed end and a barbed end. Its length is defined by its flexible shoulder domain. The soulder is composed of 2 DCTN1 subunits, 4 DCTN2 and 2 DCTN3. The 4 DCNT2 (via N-terminus) bind the ACTR1A filament and act as molecular rulers to determine the length. The pointed end is important for binding dynein-dynactin cargo adapters. Consists of 4 subunits: ACTR10, DCNT4, DCTN5 and DCTN6. The barbed end is composed of a CAPZA1:CAPZB heterodimers, which binds ACTR1A/ACTB filament and dynactin and stabilizes dynactin.

The protein resides in the cytoplasm. The protein localises to the cytoskeleton. Functionally, part of the dynactin complex that activates the molecular motor dynein for ultra-processive transport along microtubules. This Sus scrofa (Pig) protein is Actin-related protein 10 (ACTR10).